Here is a 146-residue protein sequence, read N- to C-terminus: Cystatin-C (146 aa).

Residues 1 to 26 (MAGPLRAPLLLLAILAVALAVSPAAG) form the signal peptide. Residue S43 is modified to Phosphoserine. A Secondary area of contact motif is present at residues 81–85 (QIVAG). 2 disulfide bridges follow: C99–C109 and C123–C143.

It belongs to the cystatin family.

Its subcellular location is the secreted. In terms of biological role, as an inhibitor of cysteine proteinases, this protein is thought to serve an important physiological role as a local regulator of this enzyme activity. The sequence is that of Cystatin-C (CST3) from Macaca mulatta (Rhesus macaque).